The chain runs to 81 residues: Cytochrome c6 (81 aa).

Heme c contacts are provided by Cys10, Cys13, His14, and Met54.

The protein belongs to the cytochrome c family. PetJ subfamily. As to quaternary structure, monomer. Binds 1 heme c group covalently per subunit.

The protein localises to the cellular thylakoid lumen. In terms of biological role, functions as an electron carrier between membrane-bound cytochrome b6-f and photosystem I in oxygenic photosynthesis. This chain is Cytochrome c6 (petJ), found in Microcystis aeruginosa.